The chain runs to 210 residues: Large ribosomal subunit protein uL3 (210 aa).

Positions 139–165 (AEKVHRSPGSIGHATFPGKVFKGKKMP) are disordered.

The protein belongs to the universal ribosomal protein uL3 family. In terms of assembly, part of the 50S ribosomal subunit. Forms a cluster with proteins L14 and L19.

Functionally, one of the primary rRNA binding proteins, it binds directly near the 3'-end of the 23S rRNA, where it nucleates assembly of the 50S subunit. In Maridesulfovibrio salexigens (strain ATCC 14822 / DSM 2638 / NCIMB 8403 / VKM B-1763) (Desulfovibrio salexigens), this protein is Large ribosomal subunit protein uL3.